A 284-amino-acid chain; its full sequence is Nucleotide-binding protein Sden_0486 (284 aa).

8–15 (GRSGSGKS) provides a ligand contact to ATP. GTP is bound at residue 56 to 59 (DVRN).

It belongs to the RapZ-like family.

In terms of biological role, displays ATPase and GTPase activities. This Shewanella denitrificans (strain OS217 / ATCC BAA-1090 / DSM 15013) protein is Nucleotide-binding protein Sden_0486.